Reading from the N-terminus, the 621-residue chain is Replication factor A protein 1 (621 aa).

Serine 2 is modified (N-acetylserine). The residue at position 178 (serine 178) is a Phosphoserine; by ATM or ATR. Positions 197–284 (WTIKARVSYK…PYELNLDRDT (88 aa)) form a DNA-binding region, OB. Residues 486-508 (CSNENCNKKVLEQPDGTWRCEKC) form a C4-type zinc finger.

This sequence belongs to the replication factor A protein 1 family. In terms of assembly, component of the heterotrimeric canonical replication protein A complex (RPA). Interacts with POB3. Post-translationally, the N-terminus is blocked.

The protein localises to the nucleus. As part of the replication protein A (RPA/RP-A), a single-stranded DNA-binding heterotrimeric complex, may play an essential role in DNA replication, recombination and repair. Binds and stabilizes single-stranded DNA intermediates, preventing complementary DNA reannealing and recruiting different proteins involved in DNA metabolism. Binds to single-stranded sequences participating in DNA replication in addition to those mediating transcriptional repression (URS1) and activation (CAR1). Stimulates the activity of a cognate strand exchange protein (SEP1). It cooperates with T-AG and DNA topoisomerase I to unwind template DNA containing the simian virus 40 origin of DNA replication. The protein is Replication factor A protein 1 (RFA1) of Saccharomyces cerevisiae (strain ATCC 204508 / S288c) (Baker's yeast).